The chain runs to 1296 residues: Histone-lysine N-methyltransferase EHMT1 (1296 aa).

Disordered regions lie at residues 1 to 111 (MAAA…NHVT) and 170 to 200 (PQTP…TDVR). An N-acetylalanine modification is found at A2. The segment covering 14 to 31 (QETKQDCCMKTELLREDT) has biased composition (basic and acidic residues). K23 participates in a covalent cross-link: Glycyl lysine isopeptide (Lys-Gly) (interchain with G-Cter in SUMO1); alternate. K23 is covalently cross-linked (Glycyl lysine isopeptide (Lys-Gly) (interchain with G-Cter in SUMO2); alternate). Polar residues predominate over residues 77–89 (NTRASPQEGTNRV). The segment covering 97–106 (VSERDTEVGK) has biased composition (basic and acidic residues). Glycyl lysine isopeptide (Lys-Gly) (interchain with G-Cter in SUMO2) cross-links involve residues K191, K229, K232, K315, and K325. The interval 341–470 (SLEMDSEDED…SSPGSMEQAA (130 aa)) is disordered. The segment covering 342 to 360 (LEMDSEDEDSDELEDDEDH) has biased composition (acidic residues). Over residues 371–391 (EDSRTSKESMSETDRAAKMDG) the composition is skewed to basic and acidic residues. Positions 392 to 414 (DSEEEQESPDTGEDEDGGDESDL) are enriched in acidic residues. K430 participates in a covalent cross-link: Glycyl lysine isopeptide (Lys-Gly) (interchain with G-Cter in SUMO2). S433 carries the post-translational modification Phosphoserine. Over residues 438 to 450 (PARKRRRRSRKKP) the composition is skewed to basic residues. S481 bears the Phosphoserine mark. Residues K559, K644, K659, and K729 each participate in a glycyl lysine isopeptide (Lys-Gly) (interchain with G-Cter in SUMO2) cross-link. Residues 653–714 (LAPGQEKSLA…PTSGLSQGPG (62 aa)) are disordered. ANK repeat units follow at residues 735–764 (FHPK…DPNF), 770–799 (SKRS…NIDT), 803–832 (DQRT…QVDP), 836–866 (EGST…DVNC), 870–899 (GGWT…DINI), 903–932 (EENI…DLHA), 936–965 (HGDS…DVTL), and 969–1002 (EGET…DKPV). Positions 903–905 (EEN) are histone H3K9me binding. S1046 carries the phosphoserine modification. The Pre-SET domain occupies 1058–1121 (QYCVCVDDCS…NCRNRVVQNG (64 aa)). Zn(2+) contacts are provided by C1060, C1062, C1066, C1071, C1073, C1103, C1107, C1109, and C1113. The 118-residue stretch at 1124–1241 (ARLQLYRTQD…AGEQLGFDYG (118 aa)) folds into the SET domain. S-adenosyl-L-methionine is bound by residues 1134-1136 (MGW), Y1171, and 1198-1199 (NH). Residues 1160-1179 (DSEADVREEDSYLFDLDNKD) form an interaction with histone H3 region. C1201 is a Zn(2+) binding site. The segment at 1240–1243 (YGER) is interaction with histone H3. C1254 lines the Zn(2+) pocket. S-adenosyl-L-methionine is bound at residue R1255. Residues C1256 and C1261 each contribute to the Zn(2+) site. The tract at residues 1271–1296 (RQASAAQEPQENGLPDTSSAAAADPL) is disordered.

Belongs to the class V-like SAM-binding methyltransferase superfamily. As to quaternary structure, interacts with WIZ. Part of the E2F6.com-1 complex in G0 phase composed of E2F6, MGA, MAX, TFDP1, CBX3, BAT8, EHMT1, RING1, RNF2, MBLR, L3MBTL2 and YAF2. Interacts with MPHOSPH8. Interacts with CDYL. Interacts with REST only in the presence of CDYL. Part of a complex containing at least CDYL, REST, WIZ, SETB1, EHMT1 and EHMT2. Heterodimer; heterodimerizes with EHMT2. Interacts (via ANK repeats) with RELA (when monomethylated at 'Lys-310'). Interacts with Baz2b. As to expression, ubiquitous.

The protein resides in the nucleus. The protein localises to the chromosome. The enzyme catalyses N(6)-methyl-L-lysyl(9)-[histone H3] + S-adenosyl-L-methionine = N(6),N(6)-dimethyl-L-lysyl(9)-[histone H3] + S-adenosyl-L-homocysteine + H(+). The catalysed reaction is L-lysyl(9)-[histone H3] + S-adenosyl-L-methionine = N(6)-methyl-L-lysyl(9)-[histone H3] + S-adenosyl-L-homocysteine + H(+). Its activity is regulated as follows. Methyltransferase activity is inhibited by BIX-01294. Efficiently inhibited by compound E72, a BIX-01294 derivative in which the diazepane ring and the benzyl are replaced with a 3-dimethylaminopropyl and a 5-aminopentyl group at sites B and C, respectively. Histone methyltransferase that specifically mono- and dimethylates 'Lys-9' of histone H3 (H3K9me1 and H3K9me2, respectively) in euchromatin. H3K9me represents a specific tag for epigenetic transcriptional repression by recruiting HP1 proteins to methylated histones. Also weakly methylates 'Lys-27' of histone H3 (H3K27me). Also required for DNA methylation, the histone methyltransferase activity is not required for DNA methylation, suggesting that these 2 activities function independently. Probably targeted to histone H3 by different DNA-binding proteins like E2F6, MGA, MAX and/or DP1. During G0 phase, it probably contributes to silencing of MYC- and E2F-responsive genes, suggesting a role in G0/G1 transition in cell cycle. In addition to the histone methyltransferase activity, also methylates non-histone proteins: mediates dimethylation of 'Lys-373' of p53/TP53. Represses the expression of mitochondrial function-related genes, perhaps by occupying their promoter regions, working in concert with probable chromatin reader Baz2b. The chain is Histone-lysine N-methyltransferase EHMT1 (Ehmt1) from Mus musculus (Mouse).